A 117-amino-acid polypeptide reads, in one-letter code: Large ribosomal subunit protein bL20 (117 aa).

This sequence belongs to the bacterial ribosomal protein bL20 family.

Its function is as follows. Binds directly to 23S ribosomal RNA and is necessary for the in vitro assembly process of the 50S ribosomal subunit. It is not involved in the protein synthesizing functions of that subunit. The polypeptide is Large ribosomal subunit protein bL20 (Vibrio metschnikovii).